Here is a 304-residue protein sequence, read N- to C-terminus: Probable 5-dehydro-4-deoxyglucarate dehydratase (304 aa).

It belongs to the DapA family.

It carries out the reaction 5-dehydro-4-deoxy-D-glucarate + H(+) = 2,5-dioxopentanoate + CO2 + H2O. It functions in the pathway carbohydrate acid metabolism; D-glucarate degradation; 2,5-dioxopentanoate from D-glucarate: step 2/2. This chain is Probable 5-dehydro-4-deoxyglucarate dehydratase, found in Rhodococcus opacus (strain B4).